A 1927-amino-acid polypeptide reads, in one-letter code: MEKYFGEKQERFSFRKLSVGLVSATISSLFFMSVLASSSVDAQETAGVHYKYVADSELSSEEKKQLVYDIPTYVENDDETYYLVYKLNSQNQLAELPNTGSKNERQALVAGASLAALGILIFAVSKKKVKNKTVLHLVLVAGIGNGVLVSVHALENHLLLNYNTDYELTSGEKLPLPKEISGYTYIGYIKEGKTTSDFEVSNQEKSAATPTKQQKVDYNVTPNFVDHPSTVQAIQEQTPVSSTKPTEVQVVEKPFSTELINPRKEEKQSSDSQEQLAEHKNLETKKEEKISPKEKTGVNTLNPQDEVLSGQLNKPELLYREETIETKIDFQEEIQENPDLAEGTVRVKQEGKLGKKVEIVRIFSVNKEEVSREIVSTSTTAPSPRIVEKGTKKTQVIKEQPETGVEHKDVQSGAIVEPAIQPELPEAVVSDKGEPEVQPTLPEAVVTDKGEPAVQPELPEAVVSDKGEPEQVAPLPEYKGNIEQVKPETPVEKTKEQGPEKTEEVPVKPTEETPVNPNEGTTEGTSIQGAENPVQPAEDTQTNSGKIANENTGEVSNKPSDSKPPVEESNQPEKNGTATKPENSGNTTSENGQTEPEPSNGNSTEDVSTKSNTSNSNGNEEIKQENELDPDKKVEDPEKTLELRNVSDLELYSLSNGTYKQHISLEQVPSNPNSYFVKVKSSSFKDVYLPVASISEGRKNDKILYKITAKVEKLQQEIESRYKDNFTFYLAKKGTEETTNFTSFSNLVKAINQNLSGTYHLGASLNANEVELSTDDKSYIKGTFTGQLIGEKDGKHYAIYNLKKPLFENLSGATVEKLSLKNVAISGKNDIGSLANEATNGTKIKQVHVDGVLAGERGVGGLLAKADQSSIAESSFKGRIVNTYETTDSYNIGGLVGHLTGKNASIAKSKATVTISSNTNRSDQTVGGLAGLVDRDAQIQDSYAEGDINNVKHFGRVAGVAGNLWDRTSGDVRHAGSLTNVLSDVNVTNGNAITGYHYTGMKVANTFSSKANRVFNVTLEKNEVVSKESFEERGTMLDASQIASKKAEINLITPPIVEPLSTSGKKDSDFSKIAHYQANRALVYKNIEKLLPFYNKATIVKYGNLVKENSILYQKELLSAVMMKDDQVITDIISNKQTANKLLLHYKDHSSEKFDLRYQADFANLAEYSIGDSGLLYTPNQFLYHQDSIINQVLPELNRVNYQSDAVRNTLGISPEVKLTELYLEEQFTKTKEHLAENLKKLLSSDAGLVTDNEVMTGYIIDKIKRNKEALLLGMSYLERWYNFSYGQVNVKDLVMYHPDFFGKGNTSPLDTLIELGKSGFNNLLAKNNVDTYAISLASHHGTTDLFSTLENYRKVFLPDKTNNDWFKSQTKAYIVEEKSNIEEVKTKQGLVGTKYSIGVYDRITSATWKYRNMVLPLLTLPERSVFVISTISSLGFGAYDRYRNKEHQANGDLNSFVEKSAHETAERQRDHYDYWYRILDEKGREKLYRNILLYDAYKFGTNHTEGKATEVADFDSPNPAMKHFFGPVGNKVGHNGHGAYATGDAVYYMGYRMLDKDGAITYTHEMTHNSDQDIYLGGYGRRSGLGPEFFAKGLLQAPDQPSDATITINSILKHSKSDSKEGERLQVLDPTTRFKDATDLQKYVHNMFDVVYMLEYLEGKSIVKKLNVYQKIEALRKIENQYLTDPADGNDVYATNVVKNLTEDEAKKLTSFDSLIDNNILSAREYKAGTYERNGYFTIKLFAPIFSALSGEKGTPGDLMGRRIAFELLAAKGFKDGMVPYISNQYEEDAKQQGQTINLYGKERGLVTDELVLKKVFDGKYKTWAEFKTAMYQERVDQFGNLKQVTFKDPTKPWPRYGTKTINNVDELQKLMDEAVLQDAKERNYYYWNNYNPETDSAVHKLKRAIFKAYLDQTNDFRRSIFENKK.

Positions methionine 1–alanine 42 are cleaved as a signal peptide. Residues glutamine 43–threonine 99 constitute a propeptide that is removed on maturation. The LPXTG sorting signal signature appears at leucine 96–glycine 100. Position 99 is a pentaglycyl murein peptidoglycan amidated threonine (threonine 99). 2 helical membrane-spanning segments follow: residues glutamine 106–serine 125 and lysine 132–leucine 154. The Extracellular portion of the chain corresponds to glutamate 155 to lysine 1927. Residues glutamine 235–threonine 246 show a composition bias toward polar residues. Disordered regions lie at residues glutamine 235–aspartate 305, serine 371–threonine 394, and glutamate 426–threonine 640. Residues leucine 276–threonine 296 are compositionally biased toward basic and acidic residues. The 80-residue stretch at lysine 314–lysine 393 folds into the G5 domain. 3 repeat units span residues alanine 419 to proline 435, glutamate 436 to proline 452, and alanine 453 to proline 469. The 3 X 17 AA approximate tandem repeats stretch occupies residues alanine 419–proline 469. Over residues valine 485–glutamate 511 the composition is skewed to basic and acidic residues. Composition is skewed to polar residues over residues asparagine 516 to glycine 529, glutamate 538 to proline 559, and glutamate 568 to aspartate 606. Positions threonine 609–asparagine 619 are enriched in low complexity. The span at glutamate 620–threonine 640 shows a compositional bias: basic and acidic residues. Zn(2+) is bound at residue histidine 1565. Glutamate 1566 is an active-site residue. Zn(2+) contacts are provided by histidine 1569 and glutamate 1589.

The protein belongs to the peptidase M26 family. Zn(2+) serves as cofactor. Post-translationally, the Gram-positive cell-wall anchor motif LPXTG is located in the N-terminal part, in contrast to such motifs in other known streptococcal and staphylococcal proteins. The protease could be cleaved by the sortase and anchored in the membrane via the two potential N-terminal transmembrane domains, whereas the propeptide located prior to the LPXTG motif would remain attached to the cell wall peptidoglycan by an amide bond.

Its subcellular location is the secreted. The protein resides in the cell wall. It localises to the membrane. It catalyses the reaction Cleavage of Pro-|-Thr bond in the hinge region of the heavy chain of human IgA.. Zinc metalloproteinase which cleaves human immunoglobulin A1 (IgA1) in the hinge region, rendering it less efficient in coating the surface of colonizing or invading pneumococci. May be responsible for pneumococcal infection and is potentially involved in distinct stages of pneumococcal disease. The sequence is that of Immunoglobulin A1 protease (iga) from Streptococcus pneumoniae.